A 199-amino-acid chain; its full sequence is Peroxiredoxin-1 (199 aa).

An N-acetylserine modification is found at Ser2. The 160-residue stretch at 6–165 (AKIGHRAPQF…TLRLVQAFQF (160 aa)) folds into the Thioredoxin domain. The residue at position 7 (Lys7) is an N6-acetyllysine; alternate. Lys7 is covalently cross-linked (Glycyl lysine isopeptide (Lys-Gly) (interchain with G-Cter in SUMO2); alternate). N6-acetyllysine is present on residues Lys16 and Lys27. An N6-acetyllysine; alternate modification is found at Lys35. At Lys35 the chain carries N6-succinyllysine; alternate. Cys52 serves as the catalytic Cysteine sulfenic acid (-SOH) intermediate. Phosphothreonine is present on Thr90. A Glycyl lysine isopeptide (Lys-Gly) (interchain with G-Cter in SUMO2) cross-link involves residue Lys120. At Lys136 the chain carries N6-acetyllysine. Positions 176–199 (GWKPGSDTIKPDVQKSKEYFSKQK) are disordered. A compositionally biased stretch (basic and acidic residues) spans 184–199 (IKPDVQKSKEYFSKQK). Residue Lys185 forms a Glycyl lysine isopeptide (Lys-Gly) (interchain with G-Cter in SUMO1) linkage. An N6-acetyllysine modification is found at Lys197.

The protein belongs to the peroxiredoxin family. AhpC/Prx1 subfamily. In terms of assembly, homodimer; disulfide-linked, upon oxidation. 5 homodimers assemble to form a ring-like decamer. Interacts with GDPD5; forms a mixed-disulfide with GDPD5. Interacts with SESN1 and SESN2. Interacts with FAM107A. Post-translationally, phosphorylated on Thr-90 during the M-phase, which leads to a decrease in enzymatic activity. Acetylation increases reducing activity and resistance to superoxidation. Deacetylated by HDAC6 which decreases reducing activity.

The protein resides in the cytoplasm. The enzyme catalyses a hydroperoxide + [thioredoxin]-dithiol = an alcohol + [thioredoxin]-disulfide + H2O. In terms of biological role, thiol-specific peroxidase that catalyzes the reduction of hydrogen peroxide and organic hydroperoxides to water and alcohols, respectively. Plays a role in cell protection against oxidative stress by detoxifying peroxides and as sensor of hydrogen peroxide-mediated signaling events. Might participate in the signaling cascades of growth factors and tumor necrosis factor-alpha by regulating the intracellular concentrations of H(2)O(2). Reduces an intramolecular disulfide bond in GDPD5 that gates the ability to GDPD5 to drive postmitotic motor neuron differentiation. The polypeptide is Peroxiredoxin-1 (PRDX1) (Bos taurus (Bovine)).